A 529-amino-acid chain; its full sequence is Low affinity inorganic phosphate transporter 5 (529 aa).

Residues 1-21 lie on the Cytoplasmic side of the membrane; sequence MASNNLNVLNALDTAHTQWYH. Residues 22–42 form a helical membrane-spanning segment; sequence VTAVVIAGMGFFTDAYDLFCI. Residues 43–71 lie on the Extracellular side of the membrane; it reads STISKLLGRLYYYDPHTHAPGKLPHTVNN. A helical transmembrane segment spans residues 72–92; that stretch reads WVTGVALVGTLTGQLVFGWLG. Residues 93–99 lie on the Cytoplasmic side of the membrane; the sequence is DKLGRKK. A helical transmembrane segment spans residues 100–120; that stretch reads VYGLTLILMVICALSSGLSFG. At 121–124 the chain is on the extracellular side; it reads YSRK. The chain crosses the membrane as a helical span at residues 125-145; the sequence is VVIGTLCFFRFWLGFGIGGDY. Residues 146 to 163 lie on the Cytoplasmic side of the membrane; it reads PLSATIMSEYANKRTRGA. Residues 164-184 traverse the membrane as a helical segment; sequence FIAAVFAMQGVGIIFAGLVLM. Over 185–211 the chain is Extracellular; sequence TVSKVFLMRYAGKAFSTDEVFSTEPEA. Residues 212-232 traverse the membrane as a helical segment; the sequence is DYVWRIVLMLGALPALLTYYW. The Cytoplasmic portion of the chain corresponds to 233–291; that stretch reads RMKMPETGRYTAIIEGNAKQAAIDMGKVLEIEIQAEGEKLAKFKSANDYSLLSNEFFQR. Residues 292–312 traverse the membrane as a helical segment; sequence HGLHLIGTMSTWFLLDIAFYS. Topologically, residues 313–344 are extracellular; that stretch reads QNLTQKDIFPTMGLVSDAKSISALREMFETSR. Asn314 carries N-linked (GlcNAc...) asparagine glycosylation. A helical membrane pass occupies residues 345-365; the sequence is AMFVIALLGTFPGYWFTVFFI. Topologically, residues 366–374 are cytoplasmic; sequence EKIGRFKIQ. The chain crosses the membrane as a helical span at residues 375–395; it reads LMGFFMMSIFMAIIGVRYDYL. At 396-405 the chain is on the extracellular side; that stretch reads KTKDHKWTFA. The chain crosses the membrane as a helical span at residues 406–426; sequence ALYGLTFFFANSGPNSTTFVL. Over 427–472 the chain is Cytoplasmic; sequence PAELFPTRVRSTCHALSAASGKAGAMVSAFGVQQYTQDGEVHKIKK. The helical transmembrane segment at 473 to 493 threads the bilayer; it reads AMLFLAFTNMVGFCCTFLVTE. At 494–529 the chain is on the extracellular side; the sequence is TKGRSLEEISGEDENQNETKMKGRPVSGGHQDDGWD. Residues 500–529 form a disordered region; it reads EEISGEDENQNETKMKGRPVSGGHQDDGWD. N-linked (GlcNAc...) asparagine glycosylation is present at Asn510.

The protein belongs to the major facilitator superfamily. Phosphate:H(+) symporter (TC 2.A.1.9) family. Expressed at low levels in non-mycorrhized roots.

The protein resides in the cell membrane. It carries out the reaction phosphate(in) + H(+)(in) = phosphate(out) + H(+)(out). Its function is as follows. Low-affinity transporter for external inorganic phosphate (Pi) probably involved in the acquisition of phosphate released by arbuscular mycorrhizal (AM) fungi during AM symbiosis. This chain is Low affinity inorganic phosphate transporter 5, found in Petunia hybrida (Petunia).